The following is a 270-amino-acid chain: MSLSLLLLLFLSHLILSAWAHGEKHLAPKGQPGPAATGRNPGGAGGSSTSGGTTSSSSSSVSSAPGASPGIRGSGSEQGSFQWSPSGRRTGSLYCRVGIGFHLQIYPDGKVNGSHEANMLSILEIFAVSQGIVGIRGVFSNKFLAMSKKGKLHASAKFTDDCKFRERFQENSYNTYASAIHRSEPAGREWYVALNKRGKAKRGCSPRVKPQHVSTHFLPRFKQLEHPELSFTVTVPEKKKPPSHVKPKVPLSAPRKSPNTVKYRLKFRFG.

The signal sequence occupies residues 1 to 20 (MSLSLLLLLFLSHLILSAWA). A disordered region spans residues 26 to 84 (LAPKGQPGPAATGRNPGGAGGSSTSGGTTSSSSSSVSSAPGASPGIRGSGSEQGSFQWS). The span at 40 to 49 (NPGGAGGSST) shows a compositional bias: gly residues. The segment covering 50-70 (SGGTTSSSSSSVSSAPGASPG) has biased composition (low complexity). Over residues 75–84 (GSEQGSFQWS) the composition is skewed to polar residues. Asn112 carries N-linked (GlcNAc...) asparagine glycosylation. The segment at 237-257 (EKKKPPSHVKPKVPLSAPRKS) is disordered.

The protein belongs to the heparin-binding growth factors family. Interacts with FGFR1 and FGFR2. Affinity between fibroblast growth factors (FGFs) and their receptors is increased by heparan sulfate glycosaminoglycans that function as coreceptors.

The protein localises to the secreted. In terms of biological role, plays an important role in the regulation of cell proliferation and cell differentiation. Required for normal regulation of the hair growth cycle. Functions as an inhibitor of hair elongation by promoting progression from anagen, the growth phase of the hair follicle, into catagen the apoptosis-induced regression phase. This Canis lupus familiaris (Dog) protein is Fibroblast growth factor 5 (FGF5).